Consider the following 39-residue polypeptide: Metallocarboxypeptidase inhibitor (39 aa).

At Gln-1 the chain carries Pyrrolidone carboxylic acid. 3 disulfides stabilise this stretch: Cys-8/Cys-24, Cys-12/Cys-27, and Cys-18/Cys-34.

Highly concentrated in tubers. Closely related but distinct forms of MCPI are present in leaves, stems and buds.

In terms of biological role, may play a defensive role against insect attacks. Inhibits A.aegypti carboxypeptidase CPB1. This is Metallocarboxypeptidase inhibitor from Solanum tuberosum (Potato).